A 382-amino-acid polypeptide reads, in one-letter code: Chaperone protein DnaJ 1 (382 aa).

Residues 4 to 68 (DYYGILGVDR…DKRRIVDMGG (65 aa)) form the J domain. Residues 134 to 216 (GAKKDLTLDT…CAGDGRVRAR (83 aa)) form a CR-type zinc finger. Residues Cys147, Cys150, Cys164, Cys167, Cys190, Cys193, Cys204, and Cys207 each coordinate Zn(2+). CXXCXGXG motif repeat units lie at residues 147-154 (CTKCHGSG), 164-171 (CGTCNGAG), 190-197 (CHTCDGTG), and 204-211 (CTECAGDG).

Belongs to the DnaJ family. As to quaternary structure, homodimer. It depends on Zn(2+) as a cofactor.

The protein localises to the cytoplasm. In terms of biological role, participates actively in the response to hyperosmotic and heat shock by preventing the aggregation of stress-denatured proteins and by disaggregating proteins, also in an autonomous, DnaK-independent fashion. Unfolded proteins bind initially to DnaJ; upon interaction with the DnaJ-bound protein, DnaK hydrolyzes its bound ATP, resulting in the formation of a stable complex. GrpE releases ADP from DnaK; ATP binding to DnaK triggers the release of the substrate protein, thus completing the reaction cycle. Several rounds of ATP-dependent interactions between DnaJ, DnaK and GrpE are required for fully efficient folding. Also involved, together with DnaK and GrpE, in the DNA replication of plasmids through activation of initiation proteins. This chain is Chaperone protein DnaJ 1, found in Corynebacterium glutamicum (strain ATCC 13032 / DSM 20300 / JCM 1318 / BCRC 11384 / CCUG 27702 / LMG 3730 / NBRC 12168 / NCIMB 10025 / NRRL B-2784 / 534).